The chain runs to 190 residues: Hypoxanthine/guanine phosphoribosyltransferase (190 aa).

Belongs to the purine/pyrimidine phosphoribosyltransferase family. Archaeal HPRT subfamily. In terms of assembly, homodimer.

The protein resides in the cytoplasm. It carries out the reaction IMP + diphosphate = hypoxanthine + 5-phospho-alpha-D-ribose 1-diphosphate. It catalyses the reaction GMP + diphosphate = guanine + 5-phospho-alpha-D-ribose 1-diphosphate. Its pathway is purine metabolism; IMP biosynthesis via salvage pathway; IMP from hypoxanthine: step 1/1. Its function is as follows. Catalyzes a salvage reaction resulting in the formation of IMP that is energically less costly than de novo synthesis. The protein is Hypoxanthine/guanine phosphoribosyltransferase of Methanosarcina barkeri (strain Fusaro / DSM 804).